The following is a 319-amino-acid chain: Geranylgeranyl pyrophosphate synthase (319 aa).

Isopentenyl diphosphate-binding residues include Lys42, Arg45, and His74. Mg(2+) is bound by residues Asp81 and Asp85. Arg90 lines the dimethylallyl diphosphate pocket. Arg91 serves as a coordination point for isopentenyl diphosphate. Residues Lys172, Thr173, Gln210, Lys226, and Lys236 each coordinate dimethylallyl diphosphate.

This sequence belongs to the FPP/GGPP synthase family. Homodimer. It depends on Mg(2+) as a cofactor.

The catalysed reaction is isopentenyl diphosphate + dimethylallyl diphosphate = (2E)-geranyl diphosphate + diphosphate. It catalyses the reaction isopentenyl diphosphate + (2E)-geranyl diphosphate = (2E,6E)-farnesyl diphosphate + diphosphate. It carries out the reaction isopentenyl diphosphate + (2E,6E)-farnesyl diphosphate = (2E,6E,10E)-geranylgeranyl diphosphate + diphosphate. The protein operates within isoprenoid biosynthesis; geranyl diphosphate biosynthesis; geranyl diphosphate from dimethylallyl diphosphate and isopentenyl diphosphate: step 1/1. It participates in isoprenoid biosynthesis; farnesyl diphosphate biosynthesis; farnesyl diphosphate from geranyl diphosphate and isopentenyl diphosphate: step 1/1. Its pathway is isoprenoid biosynthesis; geranylgeranyl diphosphate biosynthesis; geranylgeranyl diphosphate from farnesyl diphosphate and isopentenyl diphosphate: step 1/1. Catalyzes the addition of 3 molecules of isopentenyl diphosphate (IPP) onto dimethylallyl diphosphate (DMAPP) to form geranylgeranyl pyrophosphate (GGPP). Catalyzes the synthesis of geranylgeranyl pyrophosphate as a major product and of farnesyl pyrophosphate in smaller amounts. The chain is Geranylgeranyl pyrophosphate synthase from Geoglobus acetivorans.